A 280-amino-acid polypeptide reads, in one-letter code: Bis(5'-nucleosyl)-tetraphosphatase, symmetrical (280 aa).

The protein belongs to the Ap4A hydrolase family.

It catalyses the reaction P(1),P(4)-bis(5'-adenosyl) tetraphosphate + H2O = 2 ADP + 2 H(+). Hydrolyzes diadenosine 5',5'''-P1,P4-tetraphosphate to yield ADP. The polypeptide is Bis(5'-nucleosyl)-tetraphosphatase, symmetrical (Shigella flexneri serotype 5b (strain 8401)).